The chain runs to 419 residues: UDP-N-acetylglucosamine 1-carboxyvinyltransferase (419 aa).

22-23 (KN) contributes to the phosphoenolpyruvate binding site. Position 93 (Arg93) interacts with UDP-N-acetyl-alpha-D-glucosamine. The active-site Proton donor is the Cys117. Residue Cys117 is modified to 2-(S-cysteinyl)pyruvic acid O-phosphothioketal. The UDP-N-acetyl-alpha-D-glucosamine site is built by Asp307 and Ile329.

This sequence belongs to the EPSP synthase family. MurA subfamily.

It is found in the cytoplasm. The catalysed reaction is phosphoenolpyruvate + UDP-N-acetyl-alpha-D-glucosamine = UDP-N-acetyl-3-O-(1-carboxyvinyl)-alpha-D-glucosamine + phosphate. The protein operates within cell wall biogenesis; peptidoglycan biosynthesis. In terms of biological role, cell wall formation. Adds enolpyruvyl to UDP-N-acetylglucosamine. This Shewanella frigidimarina (strain NCIMB 400) protein is UDP-N-acetylglucosamine 1-carboxyvinyltransferase.